A 477-amino-acid polypeptide reads, in one-letter code: Asparaginyl-tRNA synthetase (477 aa).

The N-terminal 14 residues, 1 to 14 (MLGARRLLGALRLC), are a transit peptide targeting the mitochondrion. Lysine 353 bears the N6-acetyllysine mark.

Belongs to the class-II aminoacyl-tRNA synthetase family. As to quaternary structure, homodimer. Expressed in brain and inner ear, including the cochlear epithelium and organ of Corti.

It localises to the mitochondrion matrix. Its subcellular location is the mitochondrion. It catalyses the reaction tRNA(Asn) + L-asparagine + ATP = L-asparaginyl-tRNA(Asn) + AMP + diphosphate + H(+). Functionally, mitochondrial aminoacyl-tRNA synthetase that catalyzes the specific attachment of the asparagine amino acid (aa) to the homologous transfer RNA (tRNA), further participating in protein synthesis. The reaction occurs in a two steps: asparagine is first activated by ATP to form Asn-AMP and then transferred to the acceptor end of tRNA(Asn). The chain is Asparaginyl-tRNA synthetase from Mus musculus (Mouse).